The chain runs to 227 residues: 2,3-bisphosphoglycerate-dependent phosphoglycerate mutase (227 aa).

Substrate-binding positions include 7-14, 20-21, Arg-59, 86-89, Lys-97, 113-114, and 182-183; these read RHGFSEWN, TG, ERHY, RR, and GN. The active-site Tele-phosphohistidine intermediate is the His-8. Glu-86 functions as the Proton donor/acceptor in the catalytic mechanism.

The protein belongs to the phosphoglycerate mutase family. BPG-dependent PGAM subfamily. Homodimer.

It catalyses the reaction (2R)-2-phosphoglycerate = (2R)-3-phosphoglycerate. It participates in carbohydrate degradation; glycolysis; pyruvate from D-glyceraldehyde 3-phosphate: step 3/5. Its function is as follows. Catalyzes the interconversion of 2-phosphoglycerate and 3-phosphoglycerate. This is 2,3-bisphosphoglycerate-dependent phosphoglycerate mutase from Pasteurella multocida (strain Pm70).